A 592-amino-acid chain; its full sequence is A-type ATP synthase subunit A (592 aa).

ATP is bound at residue 233–240 (GPFGSGKT).

This sequence belongs to the ATPase alpha/beta chains family. As to quaternary structure, has multiple subunits with at least A(3), B(3), C, D, E, F, H, I and proteolipid K(x).

It is found in the cell membrane. The enzyme catalyses ATP + H2O + 4 H(+)(in) = ADP + phosphate + 5 H(+)(out). Component of the A-type ATP synthase that produces ATP from ADP in the presence of a proton gradient across the membrane. The A chain is the catalytic subunit. The polypeptide is A-type ATP synthase subunit A (Saccharolobus islandicus (strain L.S.2.15 / Lassen #1) (Sulfolobus islandicus)).